Reading from the N-terminus, the 209-residue chain is Pyridoxal 5'-phosphate synthase subunit PdxT (209 aa).

58-60 (GES) contacts L-glutamine. Catalysis depends on cysteine 90, which acts as the Nucleophile. L-glutamine is bound by residues arginine 119 and 148–149 (IR). Catalysis depends on charge relay system residues histidine 185 and glutamate 187.

The protein belongs to the glutaminase PdxT/SNO family. In the presence of PdxS, forms a dodecamer of heterodimers. Only shows activity in the heterodimer.

It catalyses the reaction aldehydo-D-ribose 5-phosphate + D-glyceraldehyde 3-phosphate + L-glutamine = pyridoxal 5'-phosphate + L-glutamate + phosphate + 3 H2O + H(+). The enzyme catalyses L-glutamine + H2O = L-glutamate + NH4(+). Its pathway is cofactor biosynthesis; pyridoxal 5'-phosphate biosynthesis. In terms of biological role, catalyzes the hydrolysis of glutamine to glutamate and ammonia as part of the biosynthesis of pyridoxal 5'-phosphate. The resulting ammonia molecule is channeled to the active site of PdxS. The chain is Pyridoxal 5'-phosphate synthase subunit PdxT from Clavibacter sepedonicus (Clavibacter michiganensis subsp. sepedonicus).